Here is a 305-residue protein sequence, read N- to C-terminus: Putative beta-lactamase HcpD (305 aa).

Positions 1 to 27 (MIKSWTKKWFLILFLMASCFGHLVATT) are cleaved as a signal peptide. TPR repeat units follow at residues 28–61 (GEKY…RMGV), 96–133 (HLAC…KGGV), 168–205 (GISC…KDGA), and 240–277 (GSGC…GFSG). Intrachain disulfides connect cysteine 55–cysteine 63, cysteine 91–cysteine 99, cysteine 127–cysteine 135, cysteine 163–cysteine 171, cysteine 199–cysteine 207, cysteine 235–cysteine 243, and cysteine 271–cysteine 279.

Belongs to the hcp beta-lactamase family.

The protein localises to the secreted. The enzyme catalyses a beta-lactam + H2O = a substituted beta-amino acid. Its function is as follows. May hydrolyze 6-aminopenicillinic acid and 7-aminocephalosporanic acid (ACA) derivatives. Binds to penicillin. This is Putative beta-lactamase HcpD (hcpD) from Helicobacter pylori (strain J99 / ATCC 700824) (Campylobacter pylori J99).